The primary structure comprises 364 residues: MANKTVLFNKHLESNAKMVDFHGWDMPLNYGSQIEEHHAVRQDAGMFDVSHMTVVDVTGTDACAFLRKLLANDVAKLKVPGKALYGGMLDDNAGIIDDLITYYLTDTFYRVVVNSATREKDLAWIAKQSQGFDVTVTERPELAMIAVQGPNAKAKAAAVFSADQNAAIEGMKPFFGKQAGSLFIATTGYTGEVGYEIIVPETEAEALWQALLDQGVKPCGLGARDTLRLEAGMNLYGLDMDETINPLAANMGWTIAWEPTDRDFIGRQALEALRDAGTDKLVGLVMEEKGVLRHDMPVFFTDAAGVEQQGVITSGTFSPTLGYSIAMARVPNSIGDTAEVEMRKKRVAVRVVAPNFVRNGKQAF.

This sequence belongs to the GcvT family. In terms of assembly, the glycine cleavage system is composed of four proteins: P, T, L and H.

It catalyses the reaction N(6)-[(R)-S(8)-aminomethyldihydrolipoyl]-L-lysyl-[protein] + (6S)-5,6,7,8-tetrahydrofolate = N(6)-[(R)-dihydrolipoyl]-L-lysyl-[protein] + (6R)-5,10-methylene-5,6,7,8-tetrahydrofolate + NH4(+). The glycine cleavage system catalyzes the degradation of glycine. This chain is Aminomethyltransferase, found in Shewanella sp. (strain ANA-3).